We begin with the raw amino-acid sequence, 637 residues long: 1,4-alpha-glucan branching enzyme GlgB (637 aa).

Catalysis depends on Asp307, which acts as the Nucleophile. The active-site Proton donor is the Glu361.

It belongs to the glycosyl hydrolase 13 family. GlgB subfamily. As to quaternary structure, monomer.

The catalysed reaction is Transfers a segment of a (1-&gt;4)-alpha-D-glucan chain to a primary hydroxy group in a similar glucan chain.. It participates in glycan biosynthesis; glycogen biosynthesis. In terms of biological role, catalyzes the formation of the alpha-1,6-glucosidic linkages in glycogen by scission of a 1,4-alpha-linked oligosaccharide from growing alpha-1,4-glucan chains and the subsequent attachment of the oligosaccharide to the alpha-1,6 position. This Oceanobacillus iheyensis (strain DSM 14371 / CIP 107618 / JCM 11309 / KCTC 3954 / HTE831) protein is 1,4-alpha-glucan branching enzyme GlgB.